The following is a 90-amino-acid chain: Defensin-like protein 193 (90 aa).

The signal sequence occupies residues 1–27 (MAMKSVSTLAVFAILFLVIVEMPEIKA). Intrachain disulfides connect C32–C86, C45–C69, C54–C81, and C58–C83.

It belongs to the DEFL family. Protease inhibitor I18 (RTI/MTI-2) subfamily.

Its subcellular location is the secreted. The sequence is that of Defensin-like protein 193 (ATTI2) from Arabidopsis thaliana (Mouse-ear cress).